A 254-amino-acid polypeptide reads, in one-letter code: UPF0246 protein FTH_1656 (254 aa).

Belongs to the UPF0246 family.

This Francisella tularensis subsp. holarctica (strain OSU18) protein is UPF0246 protein FTH_1656.